Here is a 592-residue protein sequence, read N- to C-terminus: uncharacterized protein (592 aa).

This is an uncharacterized protein from Saccharolobus solfataricus (strain ATCC 35092 / DSM 1617 / JCM 11322 / P2) (Sulfolobus solfataricus).